A 163-amino-acid polypeptide reads, in one-letter code: Putative 4-hydroxy-4-methyl-2-oxoglutarate aldolase (163 aa).

Substrate contacts are provided by residues 76 to 79 and Arg98; that span reads GDML. Asp99 lines the a divalent metal cation pocket.

This sequence belongs to the class II aldolase/RraA-like family. In terms of assembly, homotrimer. A divalent metal cation is required as a cofactor.

The catalysed reaction is 4-hydroxy-4-methyl-2-oxoglutarate = 2 pyruvate. It catalyses the reaction oxaloacetate + H(+) = pyruvate + CO2. Its function is as follows. Catalyzes the aldol cleavage of 4-hydroxy-4-methyl-2-oxoglutarate (HMG) into 2 molecules of pyruvate. Also contains a secondary oxaloacetate (OAA) decarboxylase activity due to the common pyruvate enolate transition state formed following C-C bond cleavage in the retro-aldol and decarboxylation reactions. The polypeptide is Putative 4-hydroxy-4-methyl-2-oxoglutarate aldolase (Pseudomonas putida (strain ATCC 47054 / DSM 6125 / CFBP 8728 / NCIMB 11950 / KT2440)).